Reading from the N-terminus, the 332-residue chain is Tsukubadiene synthase (332 aa).

Mg(2+) is bound by residues D75 and E80. A DDXXXE motif motif is present at residues 75-80 (DDHLDE). R165 is a binding site for substrate. S212, S216, and E220 together coordinate Mg(2+). The SXXXSXXXE motif motif lies at 212–220 (SDLHSFQLE). Residue 298–299 (RY) coordinates substrate.

Belongs to the terpene synthase family. Mg(2+) is required as a cofactor.

The enzyme catalyses (2E,6E,10E)-geranylgeranyl diphosphate = tsukubadiene + diphosphate. In terms of biological role, catalyzes the formation of the 5-9-5 ring skeleton (3S,6S,11R,14S)-tsukubadiene from geranylgeranyl diphosphate (GGPP) via a 1,11-cyclization and a 10Re,14Re-cyclization. This Streptomyces tsukubensis (strain DSM 42081 / NBRC 108919 / NRRL 18488 / 9993) protein is Tsukubadiene synthase.